The primary structure comprises 404 residues: 4-hydroxyphenylpyruvate dioxygenase (404 aa).

2 consecutive VOC domains span residues 28–163 (GYDH…FIQR) and 194–353 (YVDH…IFTK). His-197, His-280, and Glu-364 together coordinate Fe cation.

The protein belongs to the 4HPPD family. Requires Fe cation as cofactor.

It carries out the reaction 3-(4-hydroxyphenyl)pyruvate + O2 = homogentisate + CO2. The protein operates within amino-acid degradation; L-phenylalanine degradation; acetoacetate and fumarate from L-phenylalanine: step 3/6. In terms of biological role, key enzyme in the degradation of tyrosine. In Tetrahymena thermophila, this protein is 4-hydroxyphenylpyruvate dioxygenase (TFA).